A 159-amino-acid chain; its full sequence is Neurotrophin-3 (159 aa).

The N-terminal stretch at 1 to 3 is a signal peptide; it reads IQS. A propeptide spanning residues 4-115 is cleaved from the precursor; the sequence is TSMDQGILTE…VQNRTSRRKR (112 aa). The segment at 91–129 is disordered; it reads APLEPPPLYLTEEPLVQNRTSRRKREGKRHRGEYSVCDS. N-linked (GlcNAc...) asparagine glycosylation is present at asparagine 108. Over residues 110–121 the composition is skewed to basic residues; sequence TSRRKREGKRHR.

The protein belongs to the NGF-beta family.

It localises to the secreted. Its function is as follows. Seems to promote the survival of visceral and proprioceptive sensory neurons. The chain is Neurotrophin-3 (NTF3) from Candoia carinata (Papuan tree boa).